Consider the following 1024-residue polypeptide: Hemolysin, plasmid (1024 aa).

A compositionally biased stretch (polar residues) spans 20 to 32 (AANKLHSAGQSTK). Residues 20-39 (AANKLHSAGQSTKDALKKAA) form a disordered region. 3 consecutive transmembrane segments (helical) span residues 238 to 260 (IGAG…ILSN), 268 to 327 (KAAA…LSIA), and 365 to 411 (DASL…GILE). N6-myristoyl lysine attachment occurs at residues K564 and K690. Hemolysin-type calcium-binding repeat units follow at residues 732–749 (FGSK…DDLI), 750–767 (EGND…NDTL), 768–785 (SGGN…NDKL), 786–803 (IGVA…DDEF), 816–833 (FGGK…ADLL), and 834–851 (DGGE…NDIY).

The protein belongs to the RTX prokaryotic toxin (TC 1.C.11) family. In terms of processing, myristoylated by HlyC; the toxin only becomes active when modified. Mainly myristoylated, while a minor fraction is acylated with pentadecanoyl (C15:0; 26%) and heptadecanoyl (C17:0; 6%) fatty acyl groups. Fatty acylation is involved in binding to host membranes and promotes the irreversible insertion of Hemolysin into the host cell membrane. Can be activated by both myristoylation and palmitoylation, but HlyC catalyzes lysine myristoylation.

It localises to the secreted. The protein localises to the host cell membrane. In terms of biological role, bacterial hemolysins are exotoxins that attack blood cell membranes and cause cell rupture by forming a pore. The chain is Hemolysin, plasmid from Escherichia coli.